The primary structure comprises 20 residues: M-poneritoxin-Ng1f (20 aa).

Lysine amide is present on Lys-20.

In terms of tissue distribution, expressed by the venom gland.

Its subcellular location is the secreted. The protein localises to the target cell membrane. In terms of biological role, has activity against Gram-positive bacteria. Has insecticidal and hemolytic activities. May act by disrupting the integrity of the bacterial cell membrane. The sequence is that of M-poneritoxin-Ng1f from Neoponera goeldii (Ponerine ant).